Here is a 945-residue protein sequence, read N- to C-terminus: MMPLSPQLQQHWQTVADRLPADFPVAELSPQARSVMAFSDFVEQSVIAQPGWLNELADSAPAAEEWRHYEAWLQERLQAVTDEAGLMRELRLFRRQMMVRIAWAQALSLVREEETLQQLSVLAETLIVAARDWLYAACCKEWGTPCNAEGQPQPLLILGMGKLGGGELNFSSDIDLIFAWPEHGATRGGRRELDNAQFFTRLGQRLIKALDQPTQDGFVYRVDMRLRPFGDSGPLVLSFAALEDYYQEQGRDWERYAMVKARIMGDNDGAYASELRAMLRPFVFRRYIDFSVIQSLRNMKGMIAREVRRRGLKDNIKLGAGGIREIEFIVQVFQLIRGGREPALQQRALLPTLAAIDELHLLPEGDATLLRAAYLFLRRLENLLQSINDEQTQTLPQDELNRARLAWGMHTDDWETLSAQLANHMANVRRVFNELIGDDEAQSPDEQLAEYWRELWQDALEEDDASPALAHLNDADRRSVLALIADFRKELDRRTIGPRGRQVLDQLMPHLLSEICSRADAPLPLARITPLLTGIVTRTTYLELLSEFPGALKHLITLCAASPMVASQLARHPLLLDELLDPNTLYQPTATDAYRDELRQYLLRVPEEDEEQQLEALRQFKQAQQLHIAAADIAGTLPVMKVSDHLTWLAEAILDAVVQQAWGQMVARYGLPTHLHDRQGRGFAVVGYGKLGGWELGYSSDLDLVFLHDCPAEVMTDGEREIDGRQFYLRLAQRIMHLFSTRTSSGILYEVDARLRPSGAAGMLVTTADAFADYQQNEAWTWEHQALVRARVVYGDPALQARFDAIRRDILTTPREGATLQTEVREMREKMRAHLGNKHPNRFDIKADAGGITDIEFITQYLVLRYASDKPKLTRWSDNVRILELLAQNDIMDEEEARALTHAYTTLRDALHHLALQELPGHVAPEAFSREREQVSASWQKWLMA.

The interval 1-440 is adenylyl removase; it reads MMPLSPQLQQ…VFNELIGDDE (440 aa). An adenylyl transferase region spans residues 449 to 945; the sequence is AEYWRELWQD…SASWQKWLMA (497 aa).

This sequence belongs to the GlnE family. Mg(2+) is required as a cofactor.

The enzyme catalyses [glutamine synthetase]-O(4)-(5'-adenylyl)-L-tyrosine + phosphate = [glutamine synthetase]-L-tyrosine + ADP. It catalyses the reaction [glutamine synthetase]-L-tyrosine + ATP = [glutamine synthetase]-O(4)-(5'-adenylyl)-L-tyrosine + diphosphate. Involved in the regulation of glutamine synthetase GlnA, a key enzyme in the process to assimilate ammonia. When cellular nitrogen levels are high, the C-terminal adenylyl transferase (AT) inactivates GlnA by covalent transfer of an adenylyl group from ATP to specific tyrosine residue of GlnA, thus reducing its activity. Conversely, when nitrogen levels are low, the N-terminal adenylyl removase (AR) activates GlnA by removing the adenylyl group by phosphorolysis, increasing its activity. The regulatory region of GlnE binds the signal transduction protein PII (GlnB) which indicates the nitrogen status of the cell. The sequence is that of Bifunctional glutamine synthetase adenylyltransferase/adenylyl-removing enzyme from Klebsiella pneumoniae subsp. pneumoniae (strain ATCC 700721 / MGH 78578).